A 427-amino-acid polypeptide reads, in one-letter code: MNSTPVSELSQLIQFTVDFNDLQPELNFSPAEITCILSHERPVLLLITDGTENNAECVTLVGHVLKNKKVIKINVFPMIQSINFVNIFALPIFNITSSLLIQDNCYFKENMDPLRFHQFAYLEKGLGTTPIILYSVKNGDLIVNATVTKITWEKNEFQPLLKNSNDQKLETMYCIFTFNTTYCKYWNVFFASATPICNVEMISEHNLSVYKIEYRSPVLFVFLRYLKVMNSRFCVDECSLRLRLSKPNMQSVALNICMPYFNISEEFKTMEIYFPERMTLTPNHITQINLRGTFENPAAVGLFIPKKSNVLSFPFIWQPRETFRIYVYCRNETFVTEHDIIGHVYFISREQFPHSFHPTAHADCKSKVEAAFNSFRINFLGNDFFSDSLPILTVHPMTDFPYEQIQETENIRHNSMNITPRFKRMQL.

This is an uncharacterized protein from Human herpesvirus 7 (strain JI) (HHV-7).